An 833-amino-acid polypeptide reads, in one-letter code: Leucine--tRNA ligase (833 aa).

The short motif at 41–52 is the 'HIGH' region element; that stretch reads PYPSGAGLHVGH. The 'KMSKS' region signature appears at 610 to 614; it reads KMSKS. ATP is bound at residue Lys613.

The protein belongs to the class-I aminoacyl-tRNA synthetase family.

The protein localises to the cytoplasm. It carries out the reaction tRNA(Leu) + L-leucine + ATP = L-leucyl-tRNA(Leu) + AMP + diphosphate. The chain is Leucine--tRNA ligase from Streptococcus pneumoniae (strain CGSP14).